The chain runs to 22 residues: Chlorophyllase type 1 (22 aa).

It belongs to the AB hydrolase superfamily. Lipase family.

The enzyme catalyses a chlorophyll + H2O = a chlorophyllide + phytol + H(+). Its pathway is porphyrin-containing compound metabolism; chlorophyll degradation. Functionally, catalyzes the hydrolysis of ester bond in chlorophyll to yield chlorophyllide and phytol. The sequence is that of Chlorophyllase type 1 from Chenopodium album (Fat hen).